A 121-amino-acid chain; its full sequence is uncharacterized protein (121 aa).

Residues 10 to 87 (YIIIVTGVHP…EKLEVDFAFL (78 aa)) form the RRM domain. The tract at residues 90 to 121 (PERAPRPSISTRSRSQSPEVQHRDRDVAMAEP) is disordered. The segment covering 97–108 (SISTRSRSQSPE) has biased composition (polar residues). Over residues 109 to 121 (VQHRDRDVAMAEP) the composition is skewed to basic and acidic residues.

Its subcellular location is the cytoplasm. The protein resides in the nucleus. This is an uncharacterized protein from Schizosaccharomyces pombe (strain 972 / ATCC 24843) (Fission yeast).